We begin with the raw amino-acid sequence, 185 residues long: Ribosome-recycling factor (185 aa).

This sequence belongs to the RRF family.

It localises to the cytoplasm. Its function is as follows. Responsible for the release of ribosomes from messenger RNA at the termination of protein biosynthesis. May increase the efficiency of translation by recycling ribosomes from one round of translation to another. The polypeptide is Ribosome-recycling factor (Marinomonas sp. (strain MWYL1)).